The following is a 107-amino-acid chain: Serine-rich and transmembrane domain-containing protein 1 (107 aa).

The helical transmembrane segment at 43 to 63 (IYVSIFLSLLAFLLLLLIIAL) threads the bilayer.

It is found in the membrane. This chain is Serine-rich and transmembrane domain-containing protein 1 (Sertm1), found in Mus musculus (Mouse).